A 344-amino-acid chain; its full sequence is Uroporphyrinogen decarboxylase (344 aa).

Residues 27–31 (RQAGR), Phe46, Asp77, Tyr153, Thr208, and His324 contribute to the substrate site.

It belongs to the uroporphyrinogen decarboxylase family. As to quaternary structure, homodimer.

It localises to the cytoplasm. The enzyme catalyses uroporphyrinogen III + 4 H(+) = coproporphyrinogen III + 4 CO2. It participates in porphyrin-containing compound metabolism; protoporphyrin-IX biosynthesis; coproporphyrinogen-III from 5-aminolevulinate: step 4/4. Catalyzes the decarboxylation of four acetate groups of uroporphyrinogen-III to yield coproporphyrinogen-III. In Bradyrhizobium diazoefficiens (strain JCM 10833 / BCRC 13528 / IAM 13628 / NBRC 14792 / USDA 110), this protein is Uroporphyrinogen decarboxylase.